A 131-amino-acid polypeptide reads, in one-letter code: D-ribose pyranase (131 aa).

The active-site Proton donor is the histidine 20. Substrate is bound by residues aspartate 28, histidine 98, and 120–122; that span reads YAN.

It belongs to the RbsD / FucU family. RbsD subfamily. Homodecamer.

It is found in the cytoplasm. It catalyses the reaction beta-D-ribopyranose = beta-D-ribofuranose. It functions in the pathway carbohydrate metabolism; D-ribose degradation; D-ribose 5-phosphate from beta-D-ribopyranose: step 1/2. Catalyzes the interconversion of beta-pyran and beta-furan forms of D-ribose. The sequence is that of D-ribose pyranase from Clostridium tetani (strain Massachusetts / E88).